The primary structure comprises 245 residues: uncharacterized protein (245 aa).

Positions 1–18 (MKSAAILALLAQALAVTA) are cleaved as a signal peptide. The disordered stretch occupies residues 21–66 (VEGDRTPGTRTLDLPNFPGGSVPTRGVEKRADLPPDNGGGNAPDPD). Residues Asn-189 and Asn-225 are each glycosylated (N-linked (GlcNAc...) asparagine).

Its subcellular location is the secreted. This is an uncharacterized protein from Arthroderma benhamiae (strain ATCC MYA-4681 / CBS 112371) (Trichophyton mentagrophytes).